Consider the following 1331-residue polypeptide: Xanthine dehydrogenase/oxidase (1331 aa).

The 88-residue stretch at 4–91 folds into the 2Fe-2S ferredoxin-type domain; the sequence is DELVFFVNGK…HVAVTTVEGI (88 aa). Cys-43, Cys-48, Cys-51, Cys-73, Cys-112, Cys-115, Cys-147, and Cys-149 together coordinate [2Fe-2S] cluster. One can recognise an FAD-binding PCMH-type domain in the interval 228–413; it reads FEGERVTWIQ…LSIEIPYSKE (186 aa). FAD is bound by residues 256-263, Phe-336, 346-350, Asp-359, Leu-403, and Lys-421; these read LVVGNTEI and SIGGN. An intrachain disulfide couples Cys-535 to Cys-992. Mo-molybdopterin-binding residues include Gln-767 and Phe-798. Positions 802 and 880 each coordinate substrate. Arg-912 provides a ligand contact to Mo-molybdopterin. Positions 914 and 1010 each coordinate substrate. Residue Ala-1079 coordinates Mo-molybdopterin. The Proton acceptor role is filled by Glu-1261.

This sequence belongs to the xanthine dehydrogenase family. In terms of assembly, homodimer. Interacts with BTN1A1. Requires [2Fe-2S] cluster as cofactor. It depends on FAD as a cofactor. Mo-molybdopterin is required as a cofactor. Post-translationally, subject to partial proteolysis; this alters the enzyme from the dehydrogenase form (D) to the oxidase form (O). Contains sulfhydryl groups that are easily oxidized (in vitro); this alters the enzyme from the dehydrogenase form (D) to the oxidase form (O).

It localises to the peroxisome. Its subcellular location is the cytoplasm. The protein localises to the secreted. The catalysed reaction is xanthine + NAD(+) + H2O = urate + NADH + H(+). The enzyme catalyses hypoxanthine + NAD(+) + H2O = xanthine + NADH + H(+). It catalyses the reaction xanthine + O2 + H2O = urate + H2O2. Can be converted from the dehydrogenase form (D) to the oxidase form (O) irreversibly by proteolysis or reversibly through the oxidation of sulfhydryl groups. Functionally, key enzyme in purine degradation. Catalyzes the oxidation of hypoxanthine to xanthine. Catalyzes the oxidation of xanthine to uric acid. Contributes to the generation of reactive oxygen species. This is Xanthine dehydrogenase/oxidase (Xdh) from Rattus norvegicus (Rat).